The primary structure comprises 361 residues: Probable dual-specificity RNA methyltransferase RlmN (361 aa).

Glu91 acts as the Proton acceptor in catalysis. The Radical SAM core domain occupies 97 to 329 (QHYGLSVCVT…KKKGGNCVVR (233 aa)). Cys104 and Cys340 are oxidised to a cystine. 3 residues coordinate [4Fe-4S] cluster: Cys111, Cys115, and Cys118. Residues 163 to 164 (GE), Ser195, 218 to 220 (SLH), and Asn296 each bind S-adenosyl-L-methionine. Cys340 functions as the S-methylcysteine intermediate in the catalytic mechanism.

This sequence belongs to the radical SAM superfamily. RlmN family. [4Fe-4S] cluster serves as cofactor.

It is found in the cytoplasm. The catalysed reaction is adenosine(2503) in 23S rRNA + 2 reduced [2Fe-2S]-[ferredoxin] + 2 S-adenosyl-L-methionine = 2-methyladenosine(2503) in 23S rRNA + 5'-deoxyadenosine + L-methionine + 2 oxidized [2Fe-2S]-[ferredoxin] + S-adenosyl-L-homocysteine. It catalyses the reaction adenosine(37) in tRNA + 2 reduced [2Fe-2S]-[ferredoxin] + 2 S-adenosyl-L-methionine = 2-methyladenosine(37) in tRNA + 5'-deoxyadenosine + L-methionine + 2 oxidized [2Fe-2S]-[ferredoxin] + S-adenosyl-L-homocysteine. Specifically methylates position 2 of adenine 2503 in 23S rRNA and position 2 of adenine 37 in tRNAs. In Streptococcus pneumoniae (strain Hungary19A-6), this protein is Probable dual-specificity RNA methyltransferase RlmN.